A 260-amino-acid polypeptide reads, in one-letter code: MIEFRDVWFWYQEGKTVLKSISFSFSEGTLAIVGPNGSGKTTLVKMLNGLLKPKKGNVLIDGINTKEVSVAELSRIVGYVFQNPDAMFFEENVFKEVAFGPKNLGLNEEEVKKRVRWALEAVGLRGFENRNPFELSGGEKQRLAIACILAMKPKYLVLDEPNTGLDERGLQDLINVIKNLRREGSSIILVTHDIELVLEVADKVLLLKDGELKFFGSTKEFFELDLEGFGLKEPELVKISKDVGINFVRNVEELLKVIGL.

An ABC transporter domain is found at 2-234 (IEFRDVWFWY…DLEGFGLKEP (233 aa)). 34 to 41 (GPNGSGKT) is a binding site for ATP.

It belongs to the ABC transporter superfamily.

It localises to the cell membrane. In terms of biological role, probably part of an ABC transporter complex. Responsible for energy coupling to the transport system. The sequence is that of Putative ABC transporter ATP-binding protein PH0132 from Pyrococcus horikoshii (strain ATCC 700860 / DSM 12428 / JCM 9974 / NBRC 100139 / OT-3).